A 312-amino-acid chain; its full sequence is tRNA dimethylallyltransferase (312 aa).

Position 10–17 (10–17 (GPTASGKS)) interacts with ATP. 12 to 17 (TASGKS) is a substrate binding site. The tract at residues 35-38 (DSKQ) is interaction with substrate tRNA.

It belongs to the IPP transferase family. In terms of assembly, monomer. Mg(2+) serves as cofactor.

The enzyme catalyses adenosine(37) in tRNA + dimethylallyl diphosphate = N(6)-dimethylallyladenosine(37) in tRNA + diphosphate. In terms of biological role, catalyzes the transfer of a dimethylallyl group onto the adenine at position 37 in tRNAs that read codons beginning with uridine, leading to the formation of N6-(dimethylallyl)adenosine (i(6)A). The polypeptide is tRNA dimethylallyltransferase (Anaplasma phagocytophilum (strain HZ)).